The primary structure comprises 1862 residues: Transient receptor potential cation channel subfamily M member 7 (1862 aa).

Methionine 1 bears the N-acetylmethionine mark. Residues 1-850 are Cytoplasmic-facing; sequence MSQKSWIEST…ITRKFYAFYH (850 aa). A Phosphoserine modification is found at serine 101. Residues 544-554 are compositionally biased toward low complexity; sequence NRRSGRNASSS. The interval 544 to 574 is disordered; sequence NRRSGRNASSSTPQLRKSHETFGNRADKKEK. Basic and acidic residues predominate over residues 560–573; sequence KSHETFGNRADKKE. Residues 851–876 form a helical membrane-spanning segment; the sequence is APIVKFWFNTLAYLGFLMLYTFVVLV. Topologically, residues 877 to 882 are extracellular; it reads QMEQLP. A helical transmembrane segment spans residues 883-904; sequence SVQEWIVIAYIFTYAIEKIREV. At 905–923 the chain is on the cytoplasmic side; sequence FMSEAGKISQKIKVWFSDY. The chain crosses the membrane as a helical span at residues 924–943; sequence FNVSDTIAIISFFVGFGLRF. Topologically, residues 944 to 956 are extracellular; that stretch reads GAKWNYINAYDNH. A helical membrane pass occupies residues 957 to 980; the sequence is VFVAGRLIYCLNIIFWYVRLLDFL. The Cytoplasmic portion of the chain corresponds to 981–999; it reads AVNQQAGPYVMMIGKMVAN. Residues 1000–1023 traverse the membrane as a helical segment; that stretch reads MFYIVVIMALVLLSFGVPRKAILY. The Extracellular portion of the chain corresponds to 1024 to 1025; the sequence is PH. The pore-forming intramembrane region spans 1026-1066; the sequence is EEPSWSLAKDIVFHPYWMIFGEVYAYEIDVCANDSALPTIC. The Extracellular segment spans residues 1067–1069; sequence GPG. Residues 1070 to 1098 traverse the membrane as a helical segment; it reads TWLTPFLQAVYLFVQYIIMVNLLIAFFNN. The Cytoplasmic portion of the chain corresponds to 1099–1862; sequence VYLQVKAISN…EATNSVRLML (764 aa). S-palmitoyl cysteine attachment occurs at residues cysteine 1143, cysteine 1144, and cysteine 1146. A Phosphothreonine modification is found at threonine 1163. 5 positions are modified to phosphoserine: serine 1191, serine 1193, serine 1224, serine 1255, and serine 1258. Residues 1198–1250 are a coiled coil; the sequence is RVTFERVEQMSIQIKEVGDRVNYIKRSLQSLDSQIGHLQDLSALTVDTLKTLT. Threonine 1265 bears the Phosphothreonine mark. 9 positions are modified to phosphoserine: serine 1300, serine 1357, serine 1360, serine 1385, serine 1386, serine 1389, serine 1394, serine 1395, and serine 1403. A disordered region spans residues 1380-1418; that stretch reads NQKLGSSPNSSPHMSSPPTKFSVSTPSQPSCKSHLESTT. Residues 1385 to 1397 show a composition bias toward low complexity; sequence SSPNSSPHMSSPP. Polar residues predominate over residues 1398-1410; it reads TKFSVSTPSQPSC. At threonine 1404 the chain carries Phosphothreonine. 2 positions are modified to phosphoserine: serine 1406 and serine 1445. At threonine 1454 the chain carries Phosphothreonine. A Phosphoserine modification is found at serine 1455. Phosphothreonine is present on residues threonine 1466 and threonine 1470. A disordered region spans residues 1485 to 1511; the sequence is TPTSLHSEQESCSRRASTEDSPDVDSR. A phosphoserine mark is found at serine 1491, serine 1497, serine 1501, serine 1510, and serine 1530. The segment covering 1491 to 1502 has biased composition (basic and acidic residues); it reads SEQESCSRRAST. A Phosphothreonine modification is found at threonine 1534. Serine 1540 carries the phosphoserine modification. Threonine 1548 carries the post-translational modification Phosphothreonine. Residues serine 1564 and serine 1566 each carry the phosphoserine modification. Threonine 1580 bears the Phosphothreonine mark. In terms of domain architecture, Alpha-type protein kinase spans 1591–1821; that stretch reads ILNNSMSSWS…CCRKLKLPDL (231 aa). A phosphoserine mark is found at serine 1595 and serine 1612. ADP is bound by residues glycine 1618, glycine 1619, leucine 1620, arginine 1621, and lysine 1645. Serine 1657 carries the phosphoserine modification. Threonine 1682 is subject to Phosphothreonine. ADP is bound by residues glutamate 1717, glutamate 1718, and methionine 1720. A Zn(2+)-binding site is contributed by histidine 1750. Residue aspartate 1764 is the Proton acceptor of the active site. ADP is bound at residue aspartate 1774. Phosphoserine is present on serine 1776. Zn(2+) contacts are provided by histidine 1807, cysteine 1809, and cysteine 1813. A Phosphothreonine modification is found at threonine 1827. Residues 1840 to 1862 form a disordered region; sequence DLNLQAGNSTKESEATNSVRLML. A phosphoserine mark is found at serine 1848 and serine 1857.

This sequence in the C-terminal section; belongs to the protein kinase superfamily. Alpha-type protein kinase family. ALPK subfamily. It in the N-terminal section; belongs to the transient receptor (TC 1.A.4) family. LTrpC subfamily. TRPM7 sub-subfamily. Homodimer. Homotetramer. Forms heteromers with TRPM6; heteromeric channels are functionally different from the homomeric channels. Interacts with PLCB1. Zn(2+) is required as a cofactor. In terms of processing, palmitoylated; palmitoylation at Cys-1143, Cys-1144 and Cys-1146 promotes TRPM7 trafficking from the Golgi to the surface membrane. Autophosphorylated; autophosphorylation regulates TRPM7 kinase activity towards its substrates. Post-translationally, the C-terminal kinase domain can be cleaved from the channel segment in a cell-type-specific fashion. TRPM7 is cleaved by caspase-8, dissociating the kinase from the ion-conducting pore. The cleaved kinase fragments (M7CKs) can translocate to the cell nucleus and binds chromatin-remodeling complex proteins in a Zn(2+)-dependent manner to ultimately phosphorylate specific Ser/Thr residues of histones.

The protein resides in the cell membrane. It is found in the cytoplasmic vesicle membrane. The protein localises to the nucleus. The enzyme catalyses L-seryl-[protein] + ATP = O-phospho-L-seryl-[protein] + ADP + H(+). It carries out the reaction L-threonyl-[protein] + ATP = O-phospho-L-threonyl-[protein] + ADP + H(+). It catalyses the reaction Mg(2+)(in) = Mg(2+)(out). The catalysed reaction is Ca(2+)(in) = Ca(2+)(out). The enzyme catalyses Zn(2+)(in) = Zn(2+)(out). Channel displays constitutive activity. Channel activity is negatively regulated by cytosolic Mg(2+), Mg-ATP, low intracellular pH. Resting free cytosolic Mg(2+) and Mg-ATP concentrations seem to be sufficient to block native TRPM7 channel activity. TRPM7 channel activity is highly dependent on membrane levels of phosphatidylinositol 4,5 bisphosphate (PIP2). PIP2 hydrolysis negatively regulates TRPM7 channel activity. TRPM7 kinase activity does not affect channel activity. The kinase activity is controlled through the autophosphorylation of a serine/threonine-rich region located N-terminal to the catalytic domain. Functionally, bifunctional protein that combines an ion channel with an intrinsic kinase domain, enabling it to modulate cellular functions either by conducting ions through the pore or by phosphorylating downstream proteins via its kinase domain. The channel is highly permeable to divalent cations, specifically calcium (Ca2+), magnesium (Mg2+) and zinc (Zn2+) and mediates their influx. Controls a wide range of biological processes such as Ca2(+), Mg(2+) and Zn(2+) homeostasis, vesicular Zn(2+) release channel and intracellular Ca(2+) signaling, embryonic development, immune responses, cell motility, proliferation and differentiation. The C-terminal alpha-kinase domain autophosphorylates cytoplasmic residues of TRPM7. TRPM7 phosphorylates SMAD2, suggesting that TRPM7 kinase may play a role in activating SMAD signaling pathways. In vitro, TRPM7 kinase phosphorylates ANXA1 (annexin A1), myosin II isoforms and a variety of proteins with diverse cellular functions. The cleaved channel exhibits substantially higher current and potentiates Fas receptor signaling. In terms of biological role, the C-terminal kinase domain can be cleaved from the channel segment in a cell-type-specific fashion. In immune cells, the TRPM7 kinase domain is clipped from the channel domain by caspases in response to Fas-receptor stimulation. The cleaved kinase fragments can translocate to the nucleus, and bind chromatin-remodeling complex proteins in a Zn(2+)-dependent manner to ultimately phosphorylate specific Ser/Thr residues of histones known to be functionally important for cell differentiation and embryonic development. This is Transient receptor potential cation channel subfamily M member 7 from Rattus norvegicus (Rat).